We begin with the raw amino-acid sequence, 205 residues long: MKQASPRAGGAKARRGQVARKTKETDVSVELRLEPGESSIATGLPFFDHMLDQIARHGGLTLSVQAKGDLQVDAHHTVEDVGIGLGEALRQATADKAGLARYGVAVVPLDEALVEAVVDLSGRPHLTFNAKLPSGKRFIGAYDVDLTQDFLQAFVNHARICLHVNVRYGRNLHHVVEAIFKATARALRAATAREGTALPSTKGLL.

Positions 1-27 (MKQASPRAGGAKARRGQVARKTKETDV) are disordered.

Belongs to the imidazoleglycerol-phosphate dehydratase family.

It is found in the cytoplasm. The catalysed reaction is D-erythro-1-(imidazol-4-yl)glycerol 3-phosphate = 3-(imidazol-4-yl)-2-oxopropyl phosphate + H2O. The protein operates within amino-acid biosynthesis; L-histidine biosynthesis; L-histidine from 5-phospho-alpha-D-ribose 1-diphosphate: step 6/9. The sequence is that of Imidazoleglycerol-phosphate dehydratase from Anaeromyxobacter sp. (strain Fw109-5).